The sequence spans 211 residues: Leucine efflux protein (211 aa).

6 helical membrane passes run 5–25 (FGVL…LVPG), 49–69 (GVFI…AALI), 72–92 (TPVL…WLGG), 122–142 (VLSL…VQFI), 153–173 (FLIL…FLIF), and 191–211 (LGNG…ASLH).

Belongs to the Rht family.

It localises to the cell inner membrane. The enzyme catalyses L-leucine(in) + H(+)(out) = L-leucine(out) + H(+)(in). Exporter of leucine. This chain is Leucine efflux protein (leuE), found in Enterobacter sp. (strain 638).